A 161-amino-acid polypeptide reads, in one-letter code: Large ribosomal subunit protein uL15 (161 aa).

A disordered region spans residues 1–43 (MKLSDIADNAGSRKKRMRIGRGIGSGKGKTGGRGGKGQTARSG). Residues 21-37 (RGIGSGKGKTGGRGGKG) show a composition bias toward gly residues.

Belongs to the universal ribosomal protein uL15 family. In terms of assembly, part of the 50S ribosomal subunit.

Binds to the 23S rRNA. In Nitrobacter hamburgensis (strain DSM 10229 / NCIMB 13809 / X14), this protein is Large ribosomal subunit protein uL15.